The sequence spans 106 residues: MAEIRKGDTVKVIAGKEKGKSGRVLEVLREDGRVRVEKLMTVKRHQKKGRSQANPEGGILEMAGTIAISSVMVVGKDEKPVRREKIGRELGAKEKARLQKRKTAAK.

The span at Glu-84–Arg-97 shows a compositional bias: basic and acidic residues. Residues Glu-84–Lys-106 form a disordered region.

This sequence belongs to the universal ribosomal protein uL24 family. As to quaternary structure, part of the 50S ribosomal subunit.

In terms of biological role, one of two assembly initiator proteins, it binds directly to the 5'-end of the 23S rRNA, where it nucleates assembly of the 50S subunit. One of the proteins that surrounds the polypeptide exit tunnel on the outside of the subunit. The chain is Large ribosomal subunit protein uL24 from Anaeromyxobacter dehalogenans (strain 2CP-1 / ATCC BAA-258).